A 633-amino-acid chain; its full sequence is MENSVAPFVLYSGTEPRTPGEDSLPLPAEEEGAASTAQTPCSLSASLCFSSGDDSPPQSRASAAEGSEASPPSLRSDLRVVETQWDVSSAASPESPEECARPEEPASPEDPPSRHEHARPVELESLDELGEPVPVPPGVGSVHGEPDLVIEVAGRRLRAHKAVLAARSDYFRARASRDVLRVQGVSFTALRLLLADAYSGRMAGVRPDNVAEVVAGARRLQLPGAAQRATEAMAPQLSLDNCYEVLSAGKRQRLTELRDAAYRFMSDHYLEVLREPAVFGRLSGAERDLLLRRRLCTGRACLLAAALGTTGERSGSRPQSPSGDAESRGDAAVYCYQAEAGEWRELTRLPEGAPARGCGLCVLFNYLFLAGGVAPAGPDGRARPSDQVYCYNPVTDSWSTVRPLRQARSQVQLLALDGHLYAVGGECLLSVERYDPRADRWTAVAPLPRGAFAVAHEAATCNGEIYVSGGSLFYRLLKYDPRRDEWQECPCSSSRERSADMVALDGFLYRFDLCGSRGEAQAAVGSGGGVSVFRYHCLAKQWSQCAVHLRPPGAPAGLQPFRCVALDGTIYCVSRAGTWRFVPSQDTEAGSDMGPGGSFEPEPLGSPLDVRGVLFPFVLNLPEKPDRGEQGAV.

The tract at residues 1-118 is disordered; that stretch reads MENSVAPFVL…EDPPSRHEHA (118 aa). The segment covering 35–60 has biased composition (polar residues); it reads STAQTPCSLSASLCFSSGDDSPPQSR. The span at 61-73 shows a compositional bias: low complexity; sequence ASAAEGSEASPPS. Phosphoserine occurs at positions 70, 73, 92, 95, 107, and 113. A BTB domain is found at 146 to 206; it reads PDLVIEVAGR…AYSGRMAGVR (61 aa). 4 Kelch repeats span residues 317 to 365, 366 to 418, 419 to 463, and 465 to 506; these read RPQS…VLFN, YLFL…ALDG, HLYA…TCNG, and IYVS…ALDG.

The protein is Kelch repeat and BTB domain-containing protein 11 (Kbtbd11) of Mus musculus (Mouse).